The sequence spans 117 residues: uncharacterized protein (117 aa).

The protein resides in the cytoplasm. It is found in the nucleus. This is an uncharacterized protein from Schizosaccharomyces pombe (strain 972 / ATCC 24843) (Fission yeast).